Here is a 99-residue protein sequence, read N- to C-terminus: Nucleoid-associated protein SUB1611 (99 aa).

The protein belongs to the YbaB/EbfC family. In terms of assembly, homodimer.

The protein localises to the cytoplasm. Its subcellular location is the nucleoid. In terms of biological role, binds to DNA and alters its conformation. May be involved in regulation of gene expression, nucleoid organization and DNA protection. This Streptococcus uberis (strain ATCC BAA-854 / 0140J) protein is Nucleoid-associated protein SUB1611.